Here is a 297-residue protein sequence, read N- to C-terminus: MAADIINGMEIRESILEELRGEVANLKRDYNVVPGLVTILVGNHPASLSYVTLKIKTAIELGFHEIQDNQSETITEEELIGIIKKYNEDPLIHGILVQLPLPSHINEGKVLHAIDPNKDVDGFHPMNLGRLVIGGNAITFLPCTPAGIQELLIRSSVETLGAEVVVIGRSNIVGRPISIMLTQKGVGGDATVTLVHTKSKNIVRHCQQADIVIAAVGVPNFVKAEWIKPGATVIDVGVNRIGFNEDTGKPILSGDVDFVNVSQVAGKITPVPGGVGPMTIAMLMRNTVRSAFFHLSL.

Residues 168 to 170 (GRS), T197, and V238 each bind NADP(+).

Belongs to the tetrahydrofolate dehydrogenase/cyclohydrolase family. Homodimer.

It carries out the reaction (6R)-5,10-methylene-5,6,7,8-tetrahydrofolate + NADP(+) = (6R)-5,10-methenyltetrahydrofolate + NADPH. It catalyses the reaction (6R)-5,10-methenyltetrahydrofolate + H2O = (6R)-10-formyltetrahydrofolate + H(+). The protein operates within one-carbon metabolism; tetrahydrofolate interconversion. Catalyzes the oxidation of 5,10-methylenetetrahydrofolate to 5,10-methenyltetrahydrofolate and then the hydrolysis of 5,10-methenyltetrahydrofolate to 10-formyltetrahydrofolate. This is Bifunctional protein FolD from Lawsonia intracellularis (strain PHE/MN1-00).